The sequence spans 312 residues: Methionyl-tRNA formyltransferase (312 aa).

(6S)-5,6,7,8-tetrahydrofolate is bound at residue Ser109 to Pro112.

Belongs to the Fmt family.

It catalyses the reaction L-methionyl-tRNA(fMet) + (6R)-10-formyltetrahydrofolate = N-formyl-L-methionyl-tRNA(fMet) + (6S)-5,6,7,8-tetrahydrofolate + H(+). Attaches a formyl group to the free amino group of methionyl-tRNA(fMet). The formyl group appears to play a dual role in the initiator identity of N-formylmethionyl-tRNA by promoting its recognition by IF2 and preventing the misappropriation of this tRNA by the elongation apparatus. This Listeria monocytogenes serotype 4a (strain HCC23) protein is Methionyl-tRNA formyltransferase.